Here is a 276-residue protein sequence, read N- to C-terminus: Ribonuclease 3 (276 aa).

The disordered stretch occupies residues 1-29 (MRGTVSVPKKAEDAKADPPAKKKADTQAS). Positions 9 to 25 (KKAEDAKADPPAKKKAD) are enriched in basic and acidic residues. In terms of domain architecture, RNase III spans 31–157 (HTLLEGRLGY…VIGAVYLDQG (127 aa)). E70 is a Mg(2+) binding site. D74 is an active-site residue. Residues D143 and E146 each contribute to the Mg(2+) site. E146 is a catalytic residue. Residues 184–252 (DWKTSLQELT…AESAWRSIRA (69 aa)) form the DRBM domain. Positions 227 to 276 (YGTGTGRSKKEAEQQAAESAWRSIRAAADERAKATADAVDADPDEASASA) are disordered. The span at 265–276 (VDADPDEASASA) shows a compositional bias: acidic residues.

This sequence belongs to the ribonuclease III family. Homodimer. The cofactor is Mg(2+).

Its subcellular location is the cytoplasm. It catalyses the reaction Endonucleolytic cleavage to 5'-phosphomonoester.. Digests double-stranded RNA. Involved in the processing of primary rRNA transcript to yield the immediate precursors to the large and small rRNAs (23S and 16S). Also processes some mRNAs, and tRNAs when they are encoded in the rRNA operon. May modulate key aspects of gene expression as its absence has extensive effects on the abundance of about 200 different transcripts. Probably processes pre-crRNA and tracrRNA of type II CRISPR loci if present in the organism. The sequence is that of Ribonuclease 3 (rnc) from Streptomyces coelicolor (strain ATCC BAA-471 / A3(2) / M145).